The primary structure comprises 258 residues: Synapse differentiation-inducing gene protein 1 (258 aa).

At 1 to 181 the chain is on the cytoplasmic side; that stretch reads MAGVVEQKSG…NFLVMPPRDH (181 aa). Residue Ser-137 is modified to Phosphoserine. A helical transmembrane segment spans residues 182-202; it reads LGLSVFSMLCCFWPLGIAAFY. The Extracellular portion of the chain corresponds to 203–228; sequence LSHETNKAVAKGDFHQASTSSRRALF. An intramembrane region (helical) is located at residues 229–249; sequence LAVLSITIGTGIYVGVAVALI. Over 250–258 the chain is Extracellular; it reads AYLSKSNHL.

This sequence belongs to the CD225/Dispanin family. Homodimer. Interacts with GRIA1 and GRIA2.

Its subcellular location is the cell membrane. It localises to the early endosome membrane. It is found in the postsynaptic density membrane. The protein localises to the synapse. The protein resides in the cell projection. Its subcellular location is the dendrite. It localises to the dendritic spine. In terms of biological role, may regulate AMPA receptor content at nascent synapses, and have a role in postsynaptic development and maturation. This Bos taurus (Bovine) protein is Synapse differentiation-inducing gene protein 1 (SYNDIG1).